The chain runs to 93 residues: Small ribosomal subunit protein uS19 (93 aa).

It belongs to the universal ribosomal protein uS19 family.

Its function is as follows. Protein S19 forms a complex with S13 that binds strongly to the 16S ribosomal RNA. In Anaplasma marginale (strain Florida), this protein is Small ribosomal subunit protein uS19.